We begin with the raw amino-acid sequence, 66 residues long: ATP synthase protein 8 (66 aa).

Residues 8-24 (PWPMVIMSMILTLFYIT) form a helical membrane-spanning segment. Lys-54 is subject to N6-acetyllysine; alternate. At Lys-54 the chain carries N6-succinyllysine; alternate. Residue Lys-57 is modified to N6-acetyllysine.

It belongs to the ATPase protein 8 family. F-type ATPases have 2 components, CF(1) - the catalytic core - and CF(0) - the membrane proton channel. Component of an ATP synthase complex composed of ATP5PB, ATP5MC1, ATP5F1E, ATP5PD, ATP5ME, ATP5PF, ATP5MF, MT-ATP6, MT-ATP8, ATP5F1A, ATP5F1B, ATP5F1D, ATP5F1C, ATP5PO, ATP5MG, ATP5MK and ATP5MJ. Interacts with PRICKLE3.

It localises to the mitochondrion membrane. Mitochondrial membrane ATP synthase (F(1)F(0) ATP synthase or Complex V) produces ATP from ADP in the presence of a proton gradient across the membrane which is generated by electron transport complexes of the respiratory chain. F-type ATPases consist of two structural domains, F(1) - containing the extramembraneous catalytic core and F(0) - containing the membrane proton channel, linked together by a central stalk and a peripheral stalk. During catalysis, ATP synthesis in the catalytic domain of F(1) is coupled via a rotary mechanism of the central stalk subunits to proton translocation. Part of the complex F(0) domain. Minor subunit located with subunit a in the membrane. This chain is ATP synthase protein 8 (MT-ATP8), found in Alouatta guariba (Brown howler monkey).